Reading from the N-terminus, the 64-residue chain is Large ribosomal subunit protein uL29 (64 aa).

This sequence belongs to the universal ribosomal protein uL29 family.

The sequence is that of Large ribosomal subunit protein uL29 from Nitratiruptor sp. (strain SB155-2).